The sequence spans 828 residues: Outer membrane usher protein PmfC (828 aa).

Positions 1 to 28 (MLIPYSPHTIWKTICATLLLSLAFFSQA) are cleaved as a signal peptide.

Belongs to the fimbrial export usher family.

Its subcellular location is the cell outer membrane. In terms of biological role, involved in the export and assembly of PMF fimbrial subunits across the outer membrane. This is Outer membrane usher protein PmfC (pmfC) from Proteus mirabilis (strain HI4320).